The chain runs to 125 residues: Holo-[acyl-carrier-protein] synthase (125 aa).

Residues Asp-7 and Glu-56 each contribute to the Mg(2+) site.

It belongs to the P-Pant transferase superfamily. AcpS family. Mg(2+) serves as cofactor.

It localises to the cytoplasm. It carries out the reaction apo-[ACP] + CoA = holo-[ACP] + adenosine 3',5'-bisphosphate + H(+). Functionally, transfers the 4'-phosphopantetheine moiety from coenzyme A to a Ser of acyl-carrier-protein. This Chlamydia muridarum (strain MoPn / Nigg) protein is Holo-[acyl-carrier-protein] synthase.